The sequence spans 258 residues: Thiamine thiazole synthase (258 aa).

Residues A36, 55–56 (EK), G63, V127, and 154–156 (HVD) each bind NAD(+). Fe cation-binding residues include D156 and H171. M224 is a binding site for NAD(+). Residue R234 participates in glycine binding.

This sequence belongs to the THI4 family. As to quaternary structure, homooctamer; tetramer of dimers. It depends on Fe(2+) as a cofactor.

The catalysed reaction is hydrogen sulfide + glycine + NAD(+) = ADP-5-ethyl-4-methylthiazole-2-carboxylate + nicotinamide + 3 H2O + H(+). It functions in the pathway cofactor biosynthesis; thiamine diphosphate biosynthesis. In terms of biological role, involved in the biosynthesis of the thiazole moiety of thiamine. Catalyzes the conversion of NAD and glycine to adenosine diphosphate 5-(2-hydroxyethyl)-4-methylthiazole-2-carboxylate (ADT), an adenylated thiazole intermediate, using free sulfide as a source of sulfur. This Methanococcoides burtonii (strain DSM 6242 / NBRC 107633 / OCM 468 / ACE-M) protein is Thiamine thiazole synthase.